A 134-amino-acid chain; its full sequence is MSWQAYVDDHLMCDIEGHEGHRLTAAAIVGHDGSVWAQSATFPQFKPEEMNGITTDFNEPGHLAPTGLHLGGTKYMVIQGEAGAVIRGKKGSGGITIKKTGQALVCGIYEEPVTPGQCNMVVERLGDYLLEQGL.

A disulfide bridge links Cys13 with Cys118. The short motif at 84–100 is the Involved in PIP2 interaction element; the sequence is AVIRGKKGSGGITIKKT. A Phosphothreonine modification is found at Thr114.

It belongs to the profilin family. As to quaternary structure, occurs in many kinds of cells as a complex with monomeric actin in a 1:1 ratio. In terms of processing, phosphorylated by MAP kinases.

It is found in the cytoplasm. The protein localises to the cytoskeleton. In terms of biological role, binds to actin and affects the structure of the cytoskeleton. At high concentrations, profilin prevents the polymerization of actin, whereas it enhances it at low concentrations. The protein is Profilin-2 of Olea europaea (Common olive).